We begin with the raw amino-acid sequence, 581 residues long: Bifunctional lycopene cyclase/phytoene synthase (581 aa).

The segment at 1–243 (MGFDYALVHL…IVFGQLAFDN (243 aa)) is lycopene beta-cyclase. Transmembrane regions (helical) follow at residues 3–23 (FDYA…LTLL), 35–55 (KVAF…SYLI), 65–85 (HVII…FFVV), 120–140 (LKRL…WFCV), 152–172 (ILIW…QFII), 173–193 (GLPF…LWIV), and 221–241 (IEEA…QLAF). The segment at 250-581 (AFPHLFPDPS…RVLVAWRTLN (332 aa)) is phytoene synthase.

In the N-terminal section; belongs to the lycopene beta-cyclase family. This sequence in the C-terminal section; belongs to the phytoene/squalene synthase family.

It is found in the membrane. It catalyses the reaction all-trans-lycopene = gamma-carotene. It carries out the reaction gamma-carotene = all-trans-beta-carotene. The enzyme catalyses 2 (2E,6E,10E)-geranylgeranyl diphosphate = 15-cis-phytoene + 2 diphosphate. The protein operates within carotenoid biosynthesis; beta-carotene biosynthesis. It functions in the pathway carotenoid biosynthesis; phytoene biosynthesis; all-trans-phytoene from geranylgeranyl diphosphate: step 1/1. Its function is as follows. Bifunctional enzyme that catalyzes the reactions from geranylgeranyl diphosphate to phytoene (phytoene synthase) and lycopene to beta-carotene via the intermediate gamma-carotene (lycopene cyclase). The sequence is that of Bifunctional lycopene cyclase/phytoene synthase from Leptosphaeria maculans (strain JN3 / isolate v23.1.3 / race Av1-4-5-6-7-8) (Blackleg fungus).